A 249-amino-acid chain; its full sequence is 5'-nucleotidase SurE (249 aa).

4 residues coordinate a divalent metal cation: D8, D9, S39, and N91.

Belongs to the SurE nucleotidase family. It depends on a divalent metal cation as a cofactor.

The protein resides in the cytoplasm. It carries out the reaction a ribonucleoside 5'-phosphate + H2O = a ribonucleoside + phosphate. In terms of biological role, nucleotidase that shows phosphatase activity on nucleoside 5'-monophosphates. The polypeptide is 5'-nucleotidase SurE (Pseudomonas putida (strain ATCC 47054 / DSM 6125 / CFBP 8728 / NCIMB 11950 / KT2440)).